We begin with the raw amino-acid sequence, 486 residues long: MSSLFIDGKWLAGDGEAMAKTNPADNAPLWQGRAASAAQVDAAVRAARAAFPAWARMGLEERAKVVRRFGERLTERKAELARVIAQETGKPLWEATTEVTTMVGKIDISLKALAERTGERAAAMGDAQAVLRHKPHGVVAVFGPYNFPGHLPNGHIVPALLAGNSVIFKPSELTPWTAEETVKLWAEAGLPAGVIGLVQGAKDTGVALAGHEGLDGLFFTGSSATGALLHKQFSGRPDKILALEMGGNNPLIVGEVADVDGAVHHVIQSAFVSAGQRCTCARRLLVPQGEWGDAFVARLVEVAGKLRVGKFDAEPAPFLGAVISNAAADALLKAQDDLVAAGGTPLLAMRRLEEGAAMLTPGIIDTTAAVRPDEEFFGPLLQVIRYADFDQAIAIANDTRFGLAGGVLSDSRELYDRYWLESRAGVVNWNKPLTGASSAAPFGGIGASGNHRPSAYYAADYCAYPVASLECDSLALPAQLSPGIVL.

Residue 221–226 participates in NAD(+) binding; sequence GSSATG. Catalysis depends on residues Glu244 and Cys278.

It belongs to the aldehyde dehydrogenase family. AstD subfamily.

The catalysed reaction is N-succinyl-L-glutamate 5-semialdehyde + NAD(+) + H2O = N-succinyl-L-glutamate + NADH + 2 H(+). It participates in amino-acid degradation; L-arginine degradation via AST pathway; L-glutamate and succinate from L-arginine: step 4/5. In terms of biological role, catalyzes the NAD-dependent reduction of succinylglutamate semialdehyde into succinylglutamate. In Chromobacterium violaceum (strain ATCC 12472 / DSM 30191 / JCM 1249 / CCUG 213 / NBRC 12614 / NCIMB 9131 / NCTC 9757 / MK), this protein is N-succinylglutamate 5-semialdehyde dehydrogenase.